The primary structure comprises 177 residues: Large ribosomal subunit protein uL6 (177 aa).

The protein belongs to the universal ribosomal protein uL6 family. In terms of assembly, part of the 50S ribosomal subunit.

Its function is as follows. This protein binds to the 23S rRNA, and is important in its secondary structure. It is located near the subunit interface in the base of the L7/L12 stalk, and near the tRNA binding site of the peptidyltransferase center. This Rhodopseudomonas palustris (strain BisB18) protein is Large ribosomal subunit protein uL6.